Reading from the N-terminus, the 109-residue chain is Nucleoid-associated protein HI_0442 (109 aa).

Belongs to the YbaB/EbfC family. As to quaternary structure, homodimer.

The protein resides in the cytoplasm. It localises to the nucleoid. In terms of biological role, binds to DNA and alters its conformation. May be involved in regulation of gene expression, nucleoid organization and DNA protection. This Haemophilus influenzae (strain ATCC 51907 / DSM 11121 / KW20 / Rd) protein is Nucleoid-associated protein HI_0442.